Here is a 118-residue protein sequence, read N- to C-terminus: Large ribosomal subunit protein bL17 (118 aa).

This sequence belongs to the bacterial ribosomal protein bL17 family. As to quaternary structure, part of the 50S ribosomal subunit. Contacts protein L32.

The polypeptide is Large ribosomal subunit protein bL17 (Campylobacter concisus (strain 13826)).